The following is a 119-amino-acid chain: Large ribosomal subunit protein bL20 (119 aa).

It belongs to the bacterial ribosomal protein bL20 family.

Its function is as follows. Binds directly to 23S ribosomal RNA and is necessary for the in vitro assembly process of the 50S ribosomal subunit. It is not involved in the protein synthesizing functions of that subunit. This chain is Large ribosomal subunit protein bL20, found in Dehalococcoides mccartyi (strain ATCC BAA-2266 / KCTC 15142 / 195) (Dehalococcoides ethenogenes (strain 195)).